We begin with the raw amino-acid sequence, 92 residues long: C-C motif chemokine 4 (92 aa).

Positions 1 to 23 (MKLCVSAFSLLLLVAAFCDSVLS) are cleaved as a signal peptide. 2 cysteine pairs are disulfide-bonded: Cys-34–Cys-58 and Cys-35–Cys-74.

The protein belongs to the intercrine beta (chemokine CC) family. As to quaternary structure, homodimer.

The protein localises to the secreted. In terms of biological role, monokine with inflammatory and chemokinetic properties. The polypeptide is C-C motif chemokine 4 (Ccl4) (Rattus norvegicus (Rat)).